The primary structure comprises 343 residues: Putative dihydroflavonol 4-reductase (343 aa).

Y150 lines the NADP(+) pocket.

The protein belongs to the NAD(P)-dependent epimerase/dehydratase family. Dihydroflavonol-4-reductase subfamily.

The enzyme catalyses a (2R,3S,4S)-leucoanthocyanidin + NADP(+) = a (2R,3R)-dihydroflavonol + NADPH + H(+). The protein operates within secondary metabolite biosynthesis; flavonoid biosynthesis. The polypeptide is Putative dihydroflavonol 4-reductase (dfrA) (Synechocystis sp. (strain ATCC 27184 / PCC 6803 / Kazusa)).